The primary structure comprises 398 residues: Acetate kinase (398 aa).

Asn10 is a Mg(2+) binding site. Residue Lys17 coordinates ATP. Residue Arg91 coordinates substrate. Asp148 functions as the Proton donor/acceptor in the catalytic mechanism. Residues 208 to 212, 283 to 285, and 331 to 335 each bind ATP; these read HLGNG, DCR, and GIGEN. Glu385 provides a ligand contact to Mg(2+).

Belongs to the acetokinase family. Homodimer. The cofactor is Mg(2+). Mn(2+) serves as cofactor.

The protein resides in the cytoplasm. The catalysed reaction is acetate + ATP = acetyl phosphate + ADP. It participates in metabolic intermediate biosynthesis; acetyl-CoA biosynthesis; acetyl-CoA from acetate: step 1/2. Its function is as follows. Catalyzes the formation of acetyl phosphate from acetate and ATP. Can also catalyze the reverse reaction. In Shewanella loihica (strain ATCC BAA-1088 / PV-4), this protein is Acetate kinase.